The primary structure comprises 153 residues: NAD(P)H-quinone oxidoreductase subunit N (153 aa).

It belongs to the complex I NdhN subunit family. In terms of assembly, NDH-1 can be composed of about 15 different subunits; different subcomplexes with different compositions have been identified which probably have different functions.

It is found in the cellular thylakoid membrane. It carries out the reaction a plastoquinone + NADH + (n+1) H(+)(in) = a plastoquinol + NAD(+) + n H(+)(out). The catalysed reaction is a plastoquinone + NADPH + (n+1) H(+)(in) = a plastoquinol + NADP(+) + n H(+)(out). Functionally, NDH-1 shuttles electrons from an unknown electron donor, via FMN and iron-sulfur (Fe-S) centers, to quinones in the respiratory and/or the photosynthetic chain. The immediate electron acceptor for the enzyme in this species is believed to be plastoquinone. Couples the redox reaction to proton translocation, and thus conserves the redox energy in a proton gradient. Cyanobacterial NDH-1 also plays a role in inorganic carbon-concentration. The chain is NAD(P)H-quinone oxidoreductase subunit N from Synechococcus sp. (strain CC9311).